A 913-amino-acid polypeptide reads, in one-letter code: Protein translocase subunit SecA (913 aa).

Residues Gln-87, 105–109, and Asp-512 contribute to the ATP site; that span reads GEGKT. The interval 864-913 is disordered; sequence LDQPEEEPAEVEGQPDVAVASVRTEPKIGRNEPCPCGSGKKYKHCHGQVQ. Residues Cys-897, Cys-899, Cys-908, and His-909 each contribute to the Zn(2+) site. The segment covering 903-913 has biased composition (basic residues); the sequence is KKYKHCHGQVQ.

It belongs to the SecA family. In terms of assembly, monomer and homodimer. Part of the essential Sec protein translocation apparatus which comprises SecA, SecYEG and auxiliary proteins SecDF-YajC and YidC. The cofactor is Zn(2+).

It is found in the cell inner membrane. The protein localises to the cytoplasm. It catalyses the reaction ATP + H2O + cellular proteinSide 1 = ADP + phosphate + cellular proteinSide 2.. Functionally, part of the Sec protein translocase complex. Interacts with the SecYEG preprotein conducting channel. Has a central role in coupling the hydrolysis of ATP to the transfer of proteins into and across the cell membrane, serving both as a receptor for the preprotein-SecB complex and as an ATP-driven molecular motor driving the stepwise translocation of polypeptide chains across the membrane. In Stutzerimonas stutzeri (strain A1501) (Pseudomonas stutzeri), this protein is Protein translocase subunit SecA.